The primary structure comprises 405 residues: Deoxyguanosinetriphosphate triphosphohydrolase-like protein (405 aa).

Residues arginine 75–asparagine 219 enclose the HD domain.

This sequence belongs to the dGTPase family. Type 2 subfamily.

The polypeptide is Deoxyguanosinetriphosphate triphosphohydrolase-like protein (Rhizobium etli (strain CIAT 652)).